Reading from the N-terminus, the 779-residue chain is Endonuclease MutS2 (779 aa).

Glycine 328–threonine 335 serves as a coordination point for ATP. Residues leucine 704–glycine 779 form the Smr domain.

This sequence belongs to the DNA mismatch repair MutS family. MutS2 subfamily. As to quaternary structure, homodimer. Binds to stalled ribosomes, contacting rRNA.

Functionally, endonuclease that is involved in the suppression of homologous recombination and thus may have a key role in the control of bacterial genetic diversity. Acts as a ribosome collision sensor, splitting the ribosome into its 2 subunits. Detects stalled/collided 70S ribosomes which it binds and splits by an ATP-hydrolysis driven conformational change. Acts upstream of the ribosome quality control system (RQC), a ribosome-associated complex that mediates the extraction of incompletely synthesized nascent chains from stalled ribosomes and their subsequent degradation. Probably generates substrates for RQC. This chain is Endonuclease MutS2, found in Streptococcus pyogenes serotype M18 (strain MGAS8232).